The chain runs to 140 residues: Large ribosomal subunit protein uL11 (140 aa).

Belongs to the universal ribosomal protein uL11 family. As to quaternary structure, part of the ribosomal stalk of the 50S ribosomal subunit. Interacts with L10 and the large rRNA to form the base of the stalk. L10 forms an elongated spine to which L12 dimers bind in a sequential fashion forming a multimeric L10(L12)X complex. In terms of processing, one or more lysine residues are methylated.

Its function is as follows. Forms part of the ribosomal stalk which helps the ribosome interact with GTP-bound translation factors. The protein is Large ribosomal subunit protein uL11 of Desulforapulum autotrophicum (strain ATCC 43914 / DSM 3382 / VKM B-1955 / HRM2) (Desulfobacterium autotrophicum).